We begin with the raw amino-acid sequence, 180 residues long: Vacuolar ATPase assembly protein VMA22 (180 aa).

Positions 16–37 form a coiled coil; sequence QLLGDLEELEGKRTVLNARVEE. Residues 92-101 are compositionally biased toward basic and acidic residues; it reads EEVGPREAGL. The segment at 92–122 is disordered; it reads EEVGPREAGLRRRKGPTKTPEPESSEAPQDP. Positions 153–176 form a coiled coil; that stretch reads SLQNRIDWGRSQLRGLQEKLKQLE.

Accessory component of the multisubunit proton-transporting vacuolar (V)-ATPase protein pump. Expressed throughout the brain.

It localises to the endosome. The protein localises to the lysosome. It is found in the endoplasmic reticulum-Golgi intermediate compartment. Its subcellular location is the cytoplasmic vesicle. The protein resides in the COPI-coated vesicle. It localises to the endoplasmic reticulum. Functionally, accessory component of the proton-transporting vacuolar (V)-ATPase protein pump involved in intracellular iron homeostasis. In aerobic conditions, required for intracellular iron homeostasis, thus triggering the activity of Fe(2+) prolyl hydroxylase (PHD) enzymes, and leading to HIF1A hydroxylation and subsequent proteasomal degradation. Necessary for endolysosomal acidification and lysosomal degradation. May be involved in Golgi homeostasis. The chain is Vacuolar ATPase assembly protein VMA22 from Homo sapiens (Human).